Consider the following 291-residue polypeptide: uncharacterized protein (291 aa).

One can recognise a DAGKc domain in the interval P68–G205.

This is an uncharacterized protein from Mycobacterium tuberculosis (strain CDC 1551 / Oshkosh).